Here is a 72-residue protein sequence, read N- to C-terminus: Small proline-rich protein 2D (72 aa).

The span at 1 to 11 shows a compositional bias: low complexity; sequence MSYQQQQCKQP. Positions 1–20 are disordered; that stretch reads MSYQQQQCKQPCQPPPVCPT. 3 consecutive repeat copies span residues 21-29, 30-38, and 39-47. Positions 21-47 are 3 X 9 AA tandem repeats of P-K-C-P-[EQ]-P-C-P-[PS]; it reads PKCPEPCPPPKCPEPCPSPKCPQPCPP. Composition is skewed to pro residues over residues 33-47 and 56-72; these read PEPC…PCPP and PVTP…PKSK. The segment at 33–72 is disordered; the sequence is PEPCPSPKCPQPCPPQQCQQKYPPVTPSPPCQPKCPPKSK.

Belongs to the cornifin (SPRR) family.

The protein resides in the cytoplasm. Its function is as follows. Cross-linked envelope protein of keratinocytes. It is a keratinocyte protein that first appears in the cell cytosol, but ultimately becomes cross-linked to membrane proteins by transglutaminase. All that results in the formation of an insoluble envelope beneath the plasma membrane. The chain is Small proline-rich protein 2D (SPRR2D) from Homo sapiens (Human).